The chain runs to 336 residues: Phosphate acyltransferase (336 aa).

This sequence belongs to the PlsX family. In terms of assembly, homodimer. Probably interacts with PlsY.

The protein resides in the cytoplasm. The catalysed reaction is a fatty acyl-[ACP] + phosphate = an acyl phosphate + holo-[ACP]. The protein operates within lipid metabolism; phospholipid metabolism. In terms of biological role, catalyzes the reversible formation of acyl-phosphate (acyl-PO(4)) from acyl-[acyl-carrier-protein] (acyl-ACP). This enzyme utilizes acyl-ACP as fatty acyl donor, but not acyl-CoA. In Pseudomonas putida (strain ATCC 47054 / DSM 6125 / CFBP 8728 / NCIMB 11950 / KT2440), this protein is Phosphate acyltransferase.